Here is a 309-residue protein sequence, read N- to C-terminus: Ribonuclease Z (309 aa).

Residues H63, H65, D67, H68, H145, D216, and H274 each coordinate Zn(2+). D67 functions as the Proton acceptor in the catalytic mechanism.

It belongs to the RNase Z family. As to quaternary structure, homodimer. Zn(2+) is required as a cofactor.

The catalysed reaction is Endonucleolytic cleavage of RNA, removing extra 3' nucleotides from tRNA precursor, generating 3' termini of tRNAs. A 3'-hydroxy group is left at the tRNA terminus and a 5'-phosphoryl group is left at the trailer molecule.. In terms of biological role, zinc phosphodiesterase, which displays some tRNA 3'-processing endonuclease activity. Probably involved in tRNA maturation, by removing a 3'-trailer from precursor tRNA. The protein is Ribonuclease Z of Streptococcus sanguinis (strain SK36).